Here is a 303-residue protein sequence, read N- to C-terminus: Mycothiol acetyltransferase (303 aa).

Aspartate 33 is a binding site for 1D-myo-inositol 2-(L-cysteinylamino)-2-deoxy-alpha-D-glucopyranoside. Residues 78-80 (VVV) and 86-91 (RRGTGS) each bind acetyl-CoA. The 154-residue stretch at 150 to 303 (VRFATYSGPH…AYAAVAPTDV (154 aa)) folds into the N-acetyltransferase domain. Glutamate 177, lysine 218, and glutamate 226 together coordinate 1D-myo-inositol 2-(L-cysteinylamino)-2-deoxy-alpha-D-glucopyranoside. An acetyl-CoA-binding site is contributed by 230-232 (VGV). Residue tyrosine 269 participates in 1D-myo-inositol 2-(L-cysteinylamino)-2-deoxy-alpha-D-glucopyranoside binding. 274-279 (NTAAVK) serves as a coordination point for acetyl-CoA.

Belongs to the acetyltransferase family. MshD subfamily. Monomer.

The catalysed reaction is 1D-myo-inositol 2-(L-cysteinylamino)-2-deoxy-alpha-D-glucopyranoside + acetyl-CoA = mycothiol + CoA + H(+). In terms of biological role, catalyzes the transfer of acetyl from acetyl-CoA to desacetylmycothiol (Cys-GlcN-Ins) to form mycothiol. This chain is Mycothiol acetyltransferase, found in Mycolicibacterium gilvum (strain PYR-GCK) (Mycobacterium gilvum (strain PYR-GCK)).